The following is a 551-amino-acid chain: Interleukin-2 receptor subunit beta (551 aa).

The N-terminal stretch at 1-26 is a signal peptide; sequence MAAPALSWRLPLLILLLPLATPWASA. The Extracellular segment spans residues 27–240; it reads TVNGTSQFTC…TKPASLGKDT (214 aa). Asn-29, Asn-43, and Asn-71 each carry an N-linked (GlcNAc...) asparagine glycan. Cys-36 and Cys-46 are oxidised to a cystine. A disulfide bridge connects residues Cys-74 and Cys-86. The Fibronectin type-III domain occupies 134–234; it reads APISLQVVHV…QPLAFRTKPA (101 aa). Asn-149 carries an N-linked (GlcNAc...) asparagine glycan. The short motif at 220–224 is the WSXWS motif element; the sequence is WSPWS. The helical transmembrane segment at 241-265 threads the bilayer; that stretch reads IPWLGHLLVGLSGAFGFIILVYLLI. At 266-551 the chain is on the cytoplasmic side; sequence NCRNTGPWLK…LQGQDPTHLV (286 aa). Positions 278 to 286 match the Box 1 motif motif; sequence LKCHTPDPS. Disordered stretches follow at residues 393-412 and 433-476; these read DEGVAGAPTGSSPQPLQPLS and SLLG…GPPT.

It belongs to the type I cytokine receptor family. Type 4 subfamily. In terms of assembly, non-covalent dimer of an alpha and a beta subunit. IL2R exists in 3 different forms: a high affinity dimer, an intermediate affinity monomer (beta subunit), and a low affinity monomer (alpha subunit). The high and intermediate affinity forms also associate with a gamma subunit. Interacts with SHB upon interleukin stimulation.

The protein localises to the cell membrane. Its subcellular location is the cell surface. Receptor for interleukin-2. This beta subunit is involved in receptor mediated endocytosis and transduces the mitogenic signals of IL2. Probably in association with IL15RA, involved in the stimulation of neutrophil phagocytosis by IL15. This is Interleukin-2 receptor subunit beta (IL2RB) from Pan troglodytes (Chimpanzee).